A 95-amino-acid chain; its full sequence is UPF0512 protein H (95 aa).

It belongs to the UPF0512 family.

This is UPF0512 protein H from Dictyostelium discoideum (Social amoeba).